The chain runs to 482 residues: Zinc finger CCCH domain-containing protein 40 (482 aa).

The segment at Arg157–Pro184 adopts a C3H1-type zinc-finger fold. One can recognise an RRM domain in the interval Arg228–Pro301. Low complexity-rich tracts occupy residues Ser329–Gln347 and Pro389–Tyr428. Residues Ser329 to Asn482 are disordered. A compositionally biased stretch (pro residues) spans Met429–Gln446. Over residues Pro452–Ala466 the composition is skewed to low complexity. A compositionally biased stretch (pro residues) spans Val473 to Asn482.

The polypeptide is Zinc finger CCCH domain-containing protein 40 (Oryza sativa subsp. japonica (Rice)).